Consider the following 334-residue polypeptide: Ornithine carbamoyltransferase (334 aa).

Residues 57–60 (STRT), glutamine 84, arginine 108, and 135–138 (HPTQ) each bind carbamoyl phosphate. Residues asparagine 169, aspartate 233, and 237–238 (SM) each bind L-ornithine. Carbamoyl phosphate-binding positions include 275–276 (CL) and arginine 320.

It belongs to the aspartate/ornithine carbamoyltransferase superfamily. OTCase family.

The protein localises to the cytoplasm. The catalysed reaction is carbamoyl phosphate + L-ornithine = L-citrulline + phosphate + H(+). The protein operates within amino-acid biosynthesis; L-arginine biosynthesis; L-arginine from L-ornithine and carbamoyl phosphate: step 1/3. In terms of biological role, reversibly catalyzes the transfer of the carbamoyl group from carbamoyl phosphate (CP) to the N(epsilon) atom of ornithine (ORN) to produce L-citrulline. This Vibrio cholerae serotype O1 (strain ATCC 39315 / El Tor Inaba N16961) protein is Ornithine carbamoyltransferase.